The sequence spans 193 residues: ATP-dependent Clp protease proteolytic subunit 1 (193 aa).

The active-site Nucleophile is the Ser98. The active site involves His123.

It belongs to the peptidase S14 family. Fourteen ClpP subunits assemble into 2 heptameric rings which stack back to back to give a disk-like structure with a central cavity, resembling the structure of eukaryotic proteasomes.

It is found in the cytoplasm. It catalyses the reaction Hydrolysis of proteins to small peptides in the presence of ATP and magnesium. alpha-casein is the usual test substrate. In the absence of ATP, only oligopeptides shorter than five residues are hydrolyzed (such as succinyl-Leu-Tyr-|-NHMec, and Leu-Tyr-Leu-|-Tyr-Trp, in which cleavage of the -Tyr-|-Leu- and -Tyr-|-Trp bonds also occurs).. Cleaves peptides in various proteins in a process that requires ATP hydrolysis. Has a chymotrypsin-like activity. Plays a major role in the degradation of misfolded proteins. This is ATP-dependent Clp protease proteolytic subunit 1 from Bacillus anthracis.